We begin with the raw amino-acid sequence, 330 residues long: G-protein coupled receptor 3 (330 aa).

At 1 to 42 the chain is on the extracellular side; sequence MMWGAGSPLAWLSAGSGNVNVSSVGPAEGPTGPAAPLPSPKA. The N-linked (GlcNAc...) asparagine glycan is linked to Asn-20. Residues 43-62 traverse the membrane as a helical segment; sequence WDVVLCISGTLVSCENALVV. Over 63–74 the chain is Cytoplasmic; it reads AIIVGTPAFRAP. A helical transmembrane segment spans residues 75 to 98; the sequence is MFLLVGSLAVADLLAGLGLVLHFA. Topologically, residues 99–110 are extracellular; sequence AVFCIGSAEMSL. Residues 111–132 traverse the membrane as a helical segment; the sequence is VLVGVLAMAFTASIGSLLAITV. The Cytoplasmic segment spans residues 133 to 153; the sequence is DRYLSLYNALTYYSETTVTRT. The chain crosses the membrane as a helical span at residues 154 to 173; the sequence is YVMLALVWGGALGLGLLPVL. Residues 174-198 lie on the Extracellular side of the membrane; sequence AWNCLDGLTTCGVVYPLSKNHLVVL. A helical membrane pass occupies residues 199–217; the sequence is AIAFFMVFGIMLQLYAQIC. Over 218-245 the chain is Cytoplasmic; the sequence is RIVCRHAQQIALQRHLLPASHYVATRKG. Residues 246 to 272 form a helical membrane-spanning segment; it reads IATLAVVLGAFAACWLPFTVYCLLGDA. Residues 273–277 lie on the Extracellular side of the membrane; it reads HSPPL. The helical transmembrane segment at 278–299 threads the bilayer; sequence YTYLTLLPATYNSMINPIIYAF. Topologically, residues 300 to 330 are cytoplasmic; it reads RNQDVQKVLWAVCCCCSSSKIPFRSRSPSDV. The S-palmitoyl cysteine moiety is linked to residue Cys-313. Phosphoserine is present on residues Ser-324, Ser-326, and Ser-328.

This sequence belongs to the G-protein coupled receptor 1 family. Expressed predominantly in the central nervous system, and at low levels in the lung, kidney, testis, ovary and eye. Highly expressed in regions of the brain implicated in the Alzheimer disease.

The protein resides in the cell membrane. Its function is as follows. Constitutively active G-protein coupled receptor that maintains high 3'-5'-cyclic adenosine monophosphate (cAMP) levels that a plays a role in serveral processes including meiotic arrest in oocytes or neuronal development via activation of numerous intracellular signaling pathways. Acts as an essential activator of thermogenic adipocytes and drives thermogenesis via its intrinsic G(s)-coupling activity without the requirement of a ligand. Has a potential role in modulating a number of brain functions, including behavioral responses to stress, amyloid-beta peptide generation in neurons. Stimulates neurite outgrowth in cerebellar granular neurons modulated via PKA, ERK, and most strongly PI3K-mediated signaling pathways. This chain is G-protein coupled receptor 3 (GPR3), found in Homo sapiens (Human).